We begin with the raw amino-acid sequence, 559 residues long: Nucleolar protein 12 (559 aa).

The segment at 24-194 (ASSAGPVQAP…AGNESDIPVH (171 aa)) is disordered. The span at 44–56 (QKVREPAKPKVHL) shows a compositional bias: basic and acidic residues. Acidic residues predominate over residues 57–110 (EEDDEVLSEISEELSFEEDGPSDEDEDEDEDEENSEQEDGSGDEQEEEESEDVD). Over residues 141-180 (NDNDDLEGKYLDKVAAEEEADRAGKRQKNDALTKTEKPAV) the composition is skewed to basic and acidic residues. RRM domains lie at 211 to 320 (RTVF…SVAH) and 328 to 432 (RCVF…RAKD). The interval 429 to 559 (RAKDPRKTAL…RASEWKKKKN (131 aa)) is disordered. Composition is skewed to basic and acidic residues over residues 516–532 (EGRR…DLKQ) and 550–559 (RASEWKKKKN).

The protein belongs to the RRM RBM34 family.

Its subcellular location is the nucleus. It is found in the nucleolus. Its function is as follows. Involved in pre-25S rRNA processing. The polypeptide is Nucleolar protein 12 (NOP12) (Gibberella zeae (strain ATCC MYA-4620 / CBS 123657 / FGSC 9075 / NRRL 31084 / PH-1) (Wheat head blight fungus)).